The sequence spans 435 residues: Hyaluronidase-1 (435 aa).

Positions 1-21 are cleaved as a signal peptide; sequence MAAHLLPICTLFLNLLSVAQG. Cystine bridges form between cysteine 43/cysteine 333 and cysteine 207/cysteine 221. Asparagine 70, asparagine 99, asparagine 107, and asparagine 121 each carry an N-linked (GlcNAc...) asparagine glycan. The active-site Proton donor is the glutamate 131. N-linked (GlcNAc...) asparagine glycosylation is found at asparagine 216, asparagine 256, and asparagine 350. Intrachain disulfides connect cysteine 358–cysteine 369, cysteine 363–cysteine 418, and cysteine 420–cysteine 429. An EGF-like domain is found at 418 to 429; it reads CRCYPGWRGTWC.

This sequence belongs to the glycosyl hydrolase 56 family. In terms of tissue distribution, highly expressed in spleen, kidney, and lung.

The protein resides in the secreted. It is found in the lysosome. It catalyses the reaction Random hydrolysis of (1-&gt;4)-linkages between N-acetyl-beta-D-glucosamine and D-glucuronate residues in hyaluronate.. In terms of biological role, may have a role in promoting tumor progression. May block the TGFB1-enhanced cell growth. The protein is Hyaluronidase-1 (HYAL1) of Sus scrofa (Pig).